A 150-amino-acid polypeptide reads, in one-letter code: UPF0178 protein HCH_06960 (150 aa).

It belongs to the UPF0178 family.

The polypeptide is UPF0178 protein HCH_06960 (Hahella chejuensis (strain KCTC 2396)).